The primary structure comprises 230 residues: Uracil-DNA glycosylase (230 aa).

Asp-71 serves as the catalytic Proton acceptor.

This sequence belongs to the uracil-DNA glycosylase (UDG) superfamily. UNG family.

It is found in the cytoplasm. It carries out the reaction Hydrolyzes single-stranded DNA or mismatched double-stranded DNA and polynucleotides, releasing free uracil.. Functionally, excises uracil residues from the DNA which can arise as a result of misincorporation of dUMP residues by DNA polymerase or due to deamination of cytosine. In Nocardioides sp. (strain ATCC BAA-499 / JS614), this protein is Uracil-DNA glycosylase.